Here is a 107-residue protein sequence, read N- to C-terminus: Replication initiation control protein YabA (107 aa).

Positions 80, 82, 97, and 100 each coordinate Zn(2+).

The protein belongs to the YabA family. As to quaternary structure, homotetramer. Interacts with both DnaA and DnaN, acting as a bridge between these two proteins. Zn(2+) is required as a cofactor.

It is found in the cytoplasm. Its subcellular location is the nucleoid. Functionally, involved in control of chromosome replication initiation. Inhibits the cooperative binding of DnaA to the oriC region, thus negatively regulating initiation of chromosome replication. Inhibits the ability of DnaA-ATP to form a helix on DNA; does not disassemble preformed DnaA-DNA helices. Decreases the residence time of DnaA on the chromosome at its binding sites (oriC, replication forks and promoter-binding sites). Tethers DnaA to the replication machinery via the DNA polymerase beta sliding clamp subunit (dnaN). Associates with oriC and other DnaA targets on the chromosome in a DnaA-dependent manner. The chain is Replication initiation control protein YabA from Streptococcus gordonii (strain Challis / ATCC 35105 / BCRC 15272 / CH1 / DL1 / V288).